A 165-amino-acid chain; its full sequence is Trypsin alpha-3 (165 aa).

The Peptidase S1 domain occupies Asn-1–Asn-163. Asp-26 serves as the catalytic Charge relay system. Intrachain disulfides connect Cys-89/Cys-106 and Cys-115/Cys-139. Ser-119 acts as the Charge relay system in catalysis.

It belongs to the peptidase S1 family.

It is found in the secreted. Its subcellular location is the extracellular space. The catalysed reaction is Preferential cleavage: Arg-|-Xaa, Lys-|-Xaa.. In Lucilia cuprina (Green bottle fly), this protein is Trypsin alpha-3.